We begin with the raw amino-acid sequence, 155 residues long: Small ribosomal subunit protein uS7 (155 aa).

It belongs to the universal ribosomal protein uS7 family. As to quaternary structure, part of the 30S ribosomal subunit. Contacts proteins S9 and S11.

Functionally, one of the primary rRNA binding proteins, it binds directly to 16S rRNA where it nucleates assembly of the head domain of the 30S subunit. Is located at the subunit interface close to the decoding center, probably blocks exit of the E-site tRNA. The polypeptide is Small ribosomal subunit protein uS7 (Mycoplasmoides gallisepticum (strain R(low / passage 15 / clone 2)) (Mycoplasma gallisepticum)).